The sequence spans 528 residues: MLSKATLLLSLPFWARVANAAFGITTTSSSYVIDANSASPLKFTVNRSNCDITSINFYGAELQYQGTGSHIGSGLGSASVSATQSGDYIKVTCSTSTLTHYFVVHNGDPIIHMATHITAEPSIGELRFIARLNNELLPNEEPFGQVSNTAGGTAIEGSDVYLVNGQTRSKFYSSERFIDDHRHCVSGSAHRVCMILNQYESSSGGPFHRDINTNNGGQYNALYWYMNSGHAQTEANRMGLHGPYSMYFSRSGTPGTNIDTSFFANLDIKGYVPANARGKVSGKASGADSTFKWVVHWYNDEAQYWTYTASDGSFTSPAMKPGTYTMVYYQGEYKVASTSVSVSAGSTTTKNISGSVTTGKTIFKIGEWDGQPTGFRNAANQLRMHPSDSRMASWGPLTYTVGSSSLSDFPMAIFKSTNSPVTIKFTASSSQTGAATLRIGTTLSFAGGRPQAKVNSFTGPVPSAPKDLNSRGVTRGAYRGFGEVYDVAIPAGTIVAGTNTITISVVSGSSGDTFLSPNFIFDCVELFQ.

The signal sequence occupies residues 1–20 (MLSKATLLLSLPFWARVANA). N-linked (GlcNAc...) asparagine glycosylation occurs at asparagine 46. Intrachain disulfides connect cysteine 50-cysteine 93 and cysteine 184-cysteine 193. N-linked (GlcNAc...) asparagine glycosylation occurs at asparagine 351.

Belongs to the polysaccharide lyase 4 family.

Its subcellular location is the secreted. The enzyme catalyses Endotype eliminative cleavage of L-alpha-rhamnopyranosyl-(1-&gt;4)-alpha-D-galactopyranosyluronic acid bonds of rhamnogalacturonan I domains in ramified hairy regions of pectin leaving L-rhamnopyranose at the reducing end and 4-deoxy-4,5-unsaturated D-galactopyranosyluronic acid at the non-reducing end.. Functionally, pectinolytic enzymes consist of four classes of enzymes: pectin lyase, polygalacturonase, pectin methylesterase and rhamnogalacturonase. Degrades the rhamnogalacturonan I (RG-I) backbone of pectin. The protein is Probable rhamnogalacturonate lyase A (rglA) of Neosartorya fischeri (strain ATCC 1020 / DSM 3700 / CBS 544.65 / FGSC A1164 / JCM 1740 / NRRL 181 / WB 181) (Aspergillus fischerianus).